An 831-amino-acid chain; its full sequence is Probable basic-leucine zipper transcription factor P (831 aa).

Disordered regions lie at residues 1–33 (MNHR…PSII) and 54–166 (NITS…IASR). Over residues 54–85 (NITSSPSTSSSPPISTTTTTTTTTTTTATAKK) the composition is skewed to low complexity. The segment covering 87-96 (NSKEKKKTTN) has biased composition (basic and acidic residues). Positions 97 to 129 (KDNNNNNNNNNSNNQQQQQQQQQQQQQQQQQQQ) are enriched in low complexity. Positions 101-141 (NNNNNNNSNNQQQQQQQQQQQQQQQQQQQYEEEDDDEEDEG) form a coiled coil. The segment covering 130–143 (YEEEDDDEEDEGGD) has biased composition (acidic residues). The segment covering 144–154 (DNTKVGKGEKM) has biased composition (basic and acidic residues). Positions 151–214 (GEKMKARRTN…LELLKFSQEV (64 aa)) constitute a bZIP domain. A basic motif region spans residues 153–173 (KMKARRTNQNIASRNYRQRKK). Residues 176–183 (IKEMEDKI) form a leucine-zipper region. Composition is skewed to low complexity over residues 469-484 (SSSS…SSTS) and 497-510 (SSSN…SASS). Disordered stretches follow at residues 469-510 (SSSS…SASS), 658-697 (QQQA…HQNY), 715-771 (DATN…NTNK), and 787-810 (SLFS…QNDS). Residues 601 to 664 (AQQHAQQQAQ…QAAQQQAAQQ (64 aa)) are a coiled coil. Low complexity-rich tracts occupy residues 674 to 695 (PPQH…QQHQ), 720 to 750 (NNNN…NNNN), and 787 to 800 (SLFS…NSQS).

It belongs to the bZIP family.

It is found in the nucleus. In terms of biological role, probable transcriptional regulator. This chain is Probable basic-leucine zipper transcription factor P (bzpP), found in Dictyostelium discoideum (Social amoeba).